Consider the following 585-residue polypeptide: Arginine--tRNA ligase (585 aa).

Residues 131 to 141 carry the 'HIGH' region motif; sequence ANPTGPMHVGH.

It belongs to the class-I aminoacyl-tRNA synthetase family. Monomer.

It localises to the cytoplasm. The enzyme catalyses tRNA(Arg) + L-arginine + ATP = L-arginyl-tRNA(Arg) + AMP + diphosphate. The protein is Arginine--tRNA ligase of Rhizobium etli (strain CIAT 652).